A 105-amino-acid chain; its full sequence is MRVKKDDLVEVISGKDKGKRGKVLKVLPRENKVVIQGVNIVKRHQRPIPQLREGGIIEREAPIYASKVMLVCPNCDKPTRVGMRFLDDGAKVRFCKKCGEIVDKA.

This sequence belongs to the universal ribosomal protein uL24 family. In terms of assembly, part of the 50S ribosomal subunit.

In terms of biological role, one of two assembly initiator proteins, it binds directly to the 5'-end of the 23S rRNA, where it nucleates assembly of the 50S subunit. Its function is as follows. One of the proteins that surrounds the polypeptide exit tunnel on the outside of the subunit. This chain is Large ribosomal subunit protein uL24, found in Pseudothermotoga lettingae (strain ATCC BAA-301 / DSM 14385 / NBRC 107922 / TMO) (Thermotoga lettingae).